Reading from the N-terminus, the 962-residue chain is Leucine--tRNA ligase (962 aa).

A 'HIGH' region motif is present at residues 40-51 (PYPSGAGLHVGH). The disordered stretch occupies residues 548-570 (SRKLSGQHDEPNSNVTPSAVEGS). The 'KMSKS' region motif lies at 737–741 (KMSKS). Residue lysine 740 participates in ATP binding.

This sequence belongs to the class-I aminoacyl-tRNA synthetase family.

The protein localises to the cytoplasm. It catalyses the reaction tRNA(Leu) + L-leucine + ATP = L-leucyl-tRNA(Leu) + AMP + diphosphate. The sequence is that of Leucine--tRNA ligase from Christiangramia forsetii (strain DSM 17595 / CGMCC 1.15422 / KT0803) (Gramella forsetii).